Consider the following 610-residue polypeptide: Elongation factor 4 (610 aa).

A tr-type G domain is found at 11-193 (EKIRNFSIIA…QIVEKVPAPT (183 aa)). GTP-binding positions include 23–28 (DHGKST) and 140–143 (NKID).

Belongs to the TRAFAC class translation factor GTPase superfamily. Classic translation factor GTPase family. LepA subfamily.

The protein localises to the cell membrane. It catalyses the reaction GTP + H2O = GDP + phosphate + H(+). Its function is as follows. Required for accurate and efficient protein synthesis under certain stress conditions. May act as a fidelity factor of the translation reaction, by catalyzing a one-codon backward translocation of tRNAs on improperly translocated ribosomes. Back-translocation proceeds from a post-translocation (POST) complex to a pre-translocation (PRE) complex, thus giving elongation factor G a second chance to translocate the tRNAs correctly. Binds to ribosomes in a GTP-dependent manner. This Streptococcus agalactiae serotype Ia (strain ATCC 27591 / A909 / CDC SS700) protein is Elongation factor 4.